Consider the following 250-residue polypeptide: tRNA pseudouridine synthase A (250 aa).

Residue D52 is the Nucleophile of the active site. Residue Y111 coordinates substrate.

This sequence belongs to the tRNA pseudouridine synthase TruA family. Homodimer.

The catalysed reaction is uridine(38/39/40) in tRNA = pseudouridine(38/39/40) in tRNA. Its function is as follows. Formation of pseudouridine at positions 38, 39 and 40 in the anticodon stem and loop of transfer RNAs. This Methylorubrum extorquens (strain CM4 / NCIMB 13688) (Methylobacterium extorquens) protein is tRNA pseudouridine synthase A.